The chain runs to 115 residues: Ig heavy chain V-III region W3082 (115 aa).

The region spanning 1 to 114 (EVKLEESGGG…WGQGTLVTVS (114 aa)) is the Ig-like domain. Cys22 and Cys98 are joined by a disulfide.

The sequence is that of Ig heavy chain V-III region W3082 from Mus musculus (Mouse).